Here is a 306-residue protein sequence, read N- to C-terminus: Mitochondrial 2-oxoglutarate/malate carrier protein (306 aa).

3 Solcar repeats span residues 7–95, 103–194, and 203–292; these read VPNV…LLER, LSFG…AKQA, and DGIF…MNAA. The next 6 helical transmembrane spans lie at 9 to 38, 72 to 93, 108 to 122, 172 to 192, 205 to 226, and 268 to 286; these read NVVK…NRMQ, SAGL…AFLL, KAVL…GSFV, PTVL…SQAK, IFCH…SMPV, and FTPY…FIIL.

This sequence belongs to the mitochondrial carrier (TC 2.A.29) family. In terms of assembly, interacts with ant-1.1 and ced-9. In terms of tissue distribution, ubiquitously expressed, but highly expressed in the anterior pharynx.

The protein localises to the mitochondrion. It is found in the mitochondrion inner membrane. It carries out the reaction (S)-malate(in) + 2-oxoglutarate(out) = (S)-malate(out) + 2-oxoglutarate(in). The catalysed reaction is malonate(in) + 2-oxoglutarate(out) = malonate(out) + 2-oxoglutarate(in). It catalyses the reaction succinate(in) + 2-oxoglutarate(out) = succinate(out) + 2-oxoglutarate(in). The enzyme catalyses maleate(in) + 2-oxoglutarate(out) = maleate(out) + 2-oxoglutarate(in). It carries out the reaction oxaloacetate(in) + 2-oxoglutarate(out) = oxaloacetate(out) + 2-oxoglutarate(in). Functionally, catalyzes the transport of 2-oxoglutarate (alpha-oxoglutarate) across the inner mitochondrial membrane in an electroneutral exchange for malate. Can also exchange 2-oxoglutarate for other dicarboxylic acids such as malonate, succinate, maleate and oxaloacetate, although with lower affinity. Contributes to several metabolic processes, including the malate-aspartate shuttle, the oxoglutarate/isocitrate shuttle, in gluconeogenesis from lactate, and in nitrogen metabolism. Maintains mitochondrial fusion and fission events, and the organization and morphology of cristae. Regulator of apoptosis, insulin secretion and germline proliferation. Furthermore, plays a role in the oxidative stress response regulating endogenous levels of reactive oxygen species (ROS). Involved in the regulation of lin-35/Rb-mediated apoptosis in the germline. This chain is Mitochondrial 2-oxoglutarate/malate carrier protein, found in Caenorhabditis elegans.